The chain runs to 146 residues: D-aminoacyl-tRNA deacylase (146 aa).

Residues 138-139 carry the Gly-cisPro motif, important for rejection of L-amino acids motif; the sequence is GP.

The protein belongs to the DTD family. In terms of assembly, homodimer.

Its subcellular location is the cytoplasm. The catalysed reaction is glycyl-tRNA(Ala) + H2O = tRNA(Ala) + glycine + H(+). The enzyme catalyses a D-aminoacyl-tRNA + H2O = a tRNA + a D-alpha-amino acid + H(+). In terms of biological role, an aminoacyl-tRNA editing enzyme that deacylates mischarged D-aminoacyl-tRNAs. Also deacylates mischarged glycyl-tRNA(Ala), protecting cells against glycine mischarging by AlaRS. Acts via tRNA-based rather than protein-based catalysis; rejects L-amino acids rather than detecting D-amino acids in the active site. By recycling D-aminoacyl-tRNA to D-amino acids and free tRNA molecules, this enzyme counteracts the toxicity associated with the formation of D-aminoacyl-tRNA entities in vivo and helps enforce protein L-homochirality. The sequence is that of D-aminoacyl-tRNA deacylase from Stenotrophomonas maltophilia (strain K279a).